Consider the following 499-residue polypeptide: Probable dipeptidase B (499 aa).

Residue Cys-26 is part of the active site.

The protein belongs to the peptidase C69 family.

It carries out the reaction an L-aminoacyl-L-amino acid + H2O = 2 an L-alpha-amino acid. This is Probable dipeptidase B (pepDB) from Streptococcus pyogenes serotype M3 (strain ATCC BAA-595 / MGAS315).